A 303-amino-acid polypeptide reads, in one-letter code: Bifunctional protein FolD (303 aa).

Residues 165 to 167 (GRS), S190, and I231 each bind NADP(+).

The protein belongs to the tetrahydrofolate dehydrogenase/cyclohydrolase family. As to quaternary structure, homodimer.

It catalyses the reaction (6R)-5,10-methylene-5,6,7,8-tetrahydrofolate + NADP(+) = (6R)-5,10-methenyltetrahydrofolate + NADPH. It carries out the reaction (6R)-5,10-methenyltetrahydrofolate + H2O = (6R)-10-formyltetrahydrofolate + H(+). It functions in the pathway one-carbon metabolism; tetrahydrofolate interconversion. Functionally, catalyzes the oxidation of 5,10-methylenetetrahydrofolate to 5,10-methenyltetrahydrofolate and then the hydrolysis of 5,10-methenyltetrahydrofolate to 10-formyltetrahydrofolate. This Prochlorococcus marinus (strain NATL1A) protein is Bifunctional protein FolD.